The chain runs to 146 residues: MRGTSAVCWSLLLLIALLSQNVTAKGGRGGARGGARGASRGASRVRLKTSSRYGSLRVASQAAAAGAAARAAARLSENTWRNNDHSGMDTQFGNSTNEGMYSYRAWTSGTCPLSSHLSFRLIISIGAILTCSSSSIYVSTKINLGK.

An N-terminal signal peptide occupies residues 1–24 (MRGTSAVCWSLLLLIALLSQNVTA). Asn94 carries an N-linked (GlcNAc...) asparagine glycan. Residue Ser108 is the site of GPI-anchor amidated serine attachment. The propeptide at 109 to 146 (GTCPLSSHLSFRLIISIGAILTCSSSSIYVSTKINLGK) is removed in mature form.

It belongs to the SPRN family.

Its subcellular location is the cell membrane. In terms of biological role, prion-like protein that has PrP(C)-like neuroprotective activity. This chain is Shadow of prion protein (sprn), found in Xenopus tropicalis (Western clawed frog).